Here is a 1630-residue protein sequence, read N- to C-terminus: MGSMRKMSSSFKRGSIKSSTSGSQKGQKAWIEKTFCKRECIFVIPSTKDPNRCCCGQLTNQHIPPLPSVTPSSTAEDTKQGDAQSGKWSVSKHTQSYPTDSYGILEFQGGGYSNKAMYIRVSYDTKPDSLLHLMVKDWQLELPKLLISVHGGLQSFEMQPKLKQVFGKGLIKAAMTTGAWIFTGGVSTGKSVVSHVGDALKDHSSKSRGRLCAIGIAPWGMVENKEDLVGKDVTRVYQTMSNPLSKLSVLNNSHTHFILADNGTLGKYGAEVKLRRQLEKHISLQKINTRLGQGVPVVGLVVEGGPNVVSIVLEYLREDPPVPVVVCDGSGRASDILSFAHKYCDEGGVINESLRDQLLVTIQKTFNYSKSQSHQLFAIIMECMKKKELVTVFRMGSEGQQDVEMAILTALLKGTNVSAPDQLSLALAWNRVDIARSQIFVFGPHWPPLGSLAPPVDTKVAEKEKKPPTATTKGRGKGKGKKKGKVKEEVEEETDPRKIELLNWVNALEQAMLDALVLDRVDFVKLLIENGVNMQHFLTIPRLEELYNTRLGPPNTLHLLVRDVKKSNLPPDYHISLIDIGLVLEYLMGGAYRCNYTRKSFRTLYNNLFGPKRPKALKLLGMEDDEPPAKGKKKKKKKKEEEIDIDVDDPAVSRFQYPFHELMVWAVLMKRQKMAVFLWQRGEECMAKALVACKLYKAMAHESSESELVDDISQDLDNNSKDFGQLAVELLDQSYKHDEQVAMKLLTYELKNWSNSTCLKLAVAAKHRDFIAHTCSQMLLTDMWMGRLRMRKNPGLKVIMGILIPPTILFLEFRSYDDFSYQTSKENEDGKEKEEENVDANADAGSRKGDEENEHKKQRSIPIGTKICEFYNAPIVKFWFYTISYLGYLLLFNYVILVRMDGWPSPQEWIVISYIVSLALEKIREILMSEPGKLSQKIKVWLQEYWNITDLVAISMFMVGAILRLQNQPYMGYGRVIYCVDIILWYIRVLDIFGVNKYLGPYVMMIGKMMIDMLYFVVIMLVVLMSFGVARQAILHPEEKPSWKLARNIFYMPYWMIYGEVFADQIDRKTRIHIYAMEINPPCGENLYDEEGKRLPPCIPGAWLTPALMACYLLVANILLVNLLIAVFNNTFFEVKSISNQVWKFQRYQLIMTFHDRPVLPPPMIILSHIYIIVMRLSGRCRKKREGDQEERDRGLKLFLSDEELKKLHEFEEQCVQEHFREKEDEQQSSSDERIRVTSERVENMSMRLEEINERENFMKASLQTVDLRLSQLEELSGRMVGALENLAGIDRSDLIQARSRASSECEATYLLRQSSINSADGYSMYRYHFNGEELLFEEPALSTSPGTVFRKKTCSFRVKEEDVKSHLDQPSSLHHTPGPSPPATPGRSRLALDGPLSTELRPGLDPGISAGELDPRADFKSAEVAPSLNTANVASTQLTVESTVSHPLRESKLARYYPGDLNTYKTMKSRSFVYSEGRKLVRGLSNWGAEYSSIMDQTWNSAEWRCQVQRITRSRSTDIPYIVSEAASQDEFEDEHRESLLAPQISRSALTVSDRPEKENLLSVKPHQTLGFPCLRSRSLHGHPRSAKPSPSKLDRAGHASSTSNLAVMSDAPEGQNTQQEKGNPETEC.

Disordered stretches follow at residues 1–25, 65–92, 453–492, 620–643, and 824–858; these read MGSM…GSQK, PLPS…SVSK, APPV…EVEE, LGME…EEEI, and SKEN…HKKQ. Residues 1 to 877 lie on the Cytoplasmic side of the membrane; the sequence is MGSMRKMSSS…CEFYNAPIVK (877 aa). Low complexity predominate over residues 8-25; sequence SSSFKRGSIKSSTSGSQK. Over residues 69–92 the composition is skewed to polar residues; sequence VTPSSTAEDTKQGDAQSGKWSVSK. Residues 474-485 are compositionally biased toward basic residues; it reads GRGKGKGKKKGK. Composition is skewed to basic and acidic residues over residues 825-834 and 845-855; these read KENEDGKEKE and GSRKGDEENEH. Residues 878–898 form a helical membrane-spanning segment; that stretch reads FWFYTISYLGYLLLFNYVILV. Residues 899 to 944 are Extracellular-facing; sequence RMDGWPSPQEWIVISYIVSLALEKIREILMSEPGKLSQKIKVWLQE. The chain crosses the membrane as a helical span at residues 945-965; that stretch reads YWNITDLVAISMFMVGAILRL. Residues 966-975 are Cytoplasmic-facing; the sequence is QNQPYMGYGR. The chain crosses the membrane as a helical span at residues 976 to 996; sequence VIYCVDIILWYIRVLDIFGVN. Residues 997 to 1008 lie on the Extracellular side of the membrane; the sequence is KYLGPYVMMIGK. A helical transmembrane segment spans residues 1009-1029; sequence MMIDMLYFVVIMLVVLMSFGV. Residues 1030–1107 are Cytoplasmic-facing; that stretch reads ARQAILHPEE…CIPGAWLTPA (78 aa). Residues 1108-1128 traverse the membrane as a helical segment; that stretch reads LMACYLLVANILLVNLLIAVF. N1129 carries N-linked (GlcNAc...) asparagine glycosylation. Residues 1129 to 1158 lie on the Extracellular side of the membrane; sequence NNTFFEVKSISNQVWKFQRYQLIMTFHDRP. A helical transmembrane segment spans residues 1159–1179; it reads VLPPPMIILSHIYIIVMRLSG. Over 1180–1630 the chain is Cytoplasmic; sequence RCRKKREGDQ…QEKGNPETEC (451 aa). Positions 1235–1255 form a coiled coil; the sequence is IRVTSERVENMSMRLEEINER. 2 disordered regions span residues 1362–1414 and 1575–1630; these read EDVK…AGEL and CLRS…ETEC.

Belongs to the transient receptor (TC 1.A.4) family. LTrpC subfamily. TRPM1 sub-subfamily. As to quaternary structure, interacts with TRPM3; the interaction results in the formation of a heteromultimeric cation channel complex that are functionally different from the homomeric channels. Interacts with GPR179. Associates with both guanine nucleotide-binding proteins G(o) and beta-gamma G protein dimer; implicated in directly regulating TRPM1 channel open-state.

It is found in the cell membrane. The protein localises to the endoplasmic reticulum membrane. Its subcellular location is the cell projection. It localises to the axon. The catalysed reaction is Ca(2+)(in) = Ca(2+)(out). It catalyses the reaction Mg(2+)(in) = Mg(2+)(out). It carries out the reaction Mn(2+)(in) = Mn(2+)(out). The enzyme catalyses Ni(2+)(in) = Ni(2+)(out). With respect to regulation, inhibited by extracellular zinc ions. Inhibited by intracellular Mg(2+). Activated by the neuroactive steroid pregnenolone sulfate. Negatively regulated by activation of GRM6 receptors in the ON-bipolar cells. Constitutively open nonselective divalent cation-conducting channels which mediate the influx of Ca(2+), Mg(2+), Mn(2+), Ba(2+), and Ni(2+) into the cytoplasm, leading to membrane depolarization. Impermeable to zinc ions. In addition, forms heteromultimeric ion channels with TRPM3 which are permeable for calcium and zinc ions. Plays an essential role for the depolarizing photoresponse of retinal ON bipolar cells. In the dark, tonic release of glutamate activates the G-protein coupled receptor for glutamate GRM6, its activation induces the release of G(o) protein and the beta-gamma G protein dimer. Both subunits can interact and inactivate the TRPM1 channel. A light onset, induces decrease in glutamate release and deactivation of GRM6 leading to channel opening and membrane depolarization. May play a role in metastasis suppression. The sequence is that of Transient receptor potential cation channel subfamily M member 1 from Rattus norvegicus (Rat).